Here is a 229-residue protein sequence, read N- to C-terminus: Artemin (229 aa).

Position 1 is an N-acetylalanine (alanine 1). Positions 25–173 (HNFDPECEKA…DCLSNLHCIG (149 aa)) constitute a Ferritin-like diiron domain.

Belongs to the ferritin family.

This is Artemin from Artemia salina (Brine shrimp).